A 217-amino-acid chain; its full sequence is Ras-related protein Rab-19 (217 aa).

GTP is bound by residues Ser26, Val28, Gly29, Lys30, Thr31, Cys32, Tyr42, Glu44, and Thr49. Thr31 contacts Mg(2+). The short motif at 39–54 (SGVYMEAQQNTIGVDF) is the Switch 1 element. Mg(2+) is bound by residues Thr49 and Asp72. Positions 74 to 89 (AGQERFRTITQSYYRS) match the Switch 2 motif. Positions 75, 130, 131, 133, 161, 162, and 163 each coordinate GTP. S-geranylgeranyl cysteine attachment occurs at residues Cys215 and Cys217. Position 217 is a cysteine methyl ester (Cys217).

This sequence belongs to the small GTPase superfamily. Rab family. Mg(2+) is required as a cofactor.

The protein resides in the cell membrane. It catalyses the reaction GTP + H2O = GDP + phosphate + H(+). Its activity is regulated as follows. Regulated by guanine nucleotide exchange factors (GEFs) which promote the exchange of bound GDP for free GTP. Regulated by GTPase activating proteins (GAPs) which increase the GTP hydrolysis activity. Inhibited by GDP dissociation inhibitors (GDIs). In terms of biological role, the small GTPases Rab are key regulators of intracellular membrane trafficking, from the formation of transport vesicles to their fusion with membranes. Rabs cycle between an inactive GDP-bound form and an active GTP-bound form that is able to recruit to membranes different set of downstream effectors directly responsible for vesicle formation, movement, tethering and fusion. This chain is Ras-related protein Rab-19 (RAB19), found in Bos taurus (Bovine).